We begin with the raw amino-acid sequence, 124 residues long: UPF0375 protein Y45F10C.4 (124 aa).

Residues 1–23 (MNFLPSTVLLLSFVVAIISGSFS) form the signal peptide. 2 N-linked (GlcNAc...) asparagine glycosylation sites follow: N36 and N62.

It belongs to the UPF0375 family.

It localises to the secreted. This chain is UPF0375 protein Y45F10C.4, found in Caenorhabditis elegans.